Consider the following 453-residue polypeptide: Ribosomal protein uS12 methylthiotransferase RimO (453 aa).

Residues proline 5 to proline 120 form the MTTase N-terminal domain. The [4Fe-4S] cluster site is built by cysteine 14, cysteine 50, cysteine 79, cysteine 151, cysteine 155, and cysteine 158. In terms of domain architecture, Radical SAM core spans leucine 137–glutamine 382. A TRAM domain is found at glutamine 385–valine 453.

The protein belongs to the methylthiotransferase family. RimO subfamily. [4Fe-4S] cluster serves as cofactor.

It localises to the cytoplasm. It catalyses the reaction L-aspartate(89)-[ribosomal protein uS12]-hydrogen + (sulfur carrier)-SH + AH2 + 2 S-adenosyl-L-methionine = 3-methylsulfanyl-L-aspartate(89)-[ribosomal protein uS12]-hydrogen + (sulfur carrier)-H + 5'-deoxyadenosine + L-methionine + A + S-adenosyl-L-homocysteine + 2 H(+). Its function is as follows. Catalyzes the methylthiolation of an aspartic acid residue of ribosomal protein uS12. This Burkholderia ambifaria (strain ATCC BAA-244 / DSM 16087 / CCUG 44356 / LMG 19182 / AMMD) (Burkholderia cepacia (strain AMMD)) protein is Ribosomal protein uS12 methylthiotransferase RimO.